A 368-amino-acid chain; its full sequence is Phenylalanine--tRNA ligase alpha subunit (368 aa).

Glutamate 268 lines the Mg(2+) pocket.

This sequence belongs to the class-II aminoacyl-tRNA synthetase family. Phe-tRNA synthetase alpha subunit type 1 subfamily. In terms of assembly, tetramer of two alpha and two beta subunits. Mg(2+) is required as a cofactor.

The protein resides in the cytoplasm. The enzyme catalyses tRNA(Phe) + L-phenylalanine + ATP = L-phenylalanyl-tRNA(Phe) + AMP + diphosphate + H(+). This chain is Phenylalanine--tRNA ligase alpha subunit, found in Nitrobacter hamburgensis (strain DSM 10229 / NCIMB 13809 / X14).